The sequence spans 1019 residues: Mediator of replication checkpoint protein 1 (1019 aa).

Disordered stretches follow at residues 1–33 (MASL…LDTP), 105–143 (QGGK…DRNS), 166–202 (NSAT…SDRK), 261–290 (EEEA…IVNS), 443–683 (IQGE…SKTF), and 965–1019 (TQRP…SDFD). The segment covering 17-30 (SDEASINDDQEDIL) has biased composition (acidic residues). Acidic residues predominate over residues 177 to 191 (LDSESADDSDLADES). 3 stretches are compositionally biased toward basic and acidic residues: residues 192–202 (ELSKKYTSDRK), 271–281 (NVEKEEPKPSV), and 454–468 (LERA…RQLE). A compositionally biased stretch (acidic residues) spans 476–486 (DEGELNDEEEV). Positions 487-503 (ISSSNTPSTKAKTTNKV) are enriched in polar residues. Positions 556–580 (MIRDSFDRLSSESIKDSQKTEELHD) are enriched in basic and acidic residues. Polar residues-rich tracts occupy residues 590–607 (QSTS…SQLT) and 630–658 (NTSS…IDSV). A Phosphoserine modification is found at serine 604. Position 645 is a phosphothreonine (threonine 645). Residues 671–681 (EERRESRRDSK) show a composition bias toward basic and acidic residues.

As to quaternary structure, interacts with cds1. In terms of processing, phosphorylated by rad3 and tel1.

The protein resides in the nucleus. In terms of biological role, component of the replisome and is required for rad3-dependent activation of the checkpoint kinase cds1 in response to replication fork arrest. Phosphorylation allows it to mediate the activation of cds1. This Schizosaccharomyces pombe (strain 972 / ATCC 24843) (Fission yeast) protein is Mediator of replication checkpoint protein 1 (mrc1).